Reading from the N-terminus, the 495-residue chain is Cobyric acid synthase (495 aa).

The GATase cobBQ-type domain maps to 253-446; the sequence is KISIAIVYFP…FHGIFDGSAF (194 aa). The active-site Nucleophile is the Cys-334. The active site involves His-438.

It belongs to the CobB/CobQ family. CobQ subfamily.

Its pathway is cofactor biosynthesis; adenosylcobalamin biosynthesis. In terms of biological role, catalyzes amidations at positions B, D, E, and G on adenosylcobyrinic A,C-diamide. NH(2) groups are provided by glutamine, and one molecule of ATP is hydrogenolyzed for each amidation. This chain is Cobyric acid synthase, found in Chlorobium phaeobacteroides (strain BS1).